The following is a 229-amino-acid chain: Cytidylate kinase (229 aa).

12–20 (GPSGTGKSS) serves as a coordination point for ATP.

This sequence belongs to the cytidylate kinase family. Type 1 subfamily.

It localises to the cytoplasm. It catalyses the reaction CMP + ATP = CDP + ADP. The enzyme catalyses dCMP + ATP = dCDP + ADP. This Rhodococcus opacus (strain B4) protein is Cytidylate kinase.